A 407-amino-acid polypeptide reads, in one-letter code: Phosphopentomutase (407 aa).

Residues aspartate 10, aspartate 306, histidine 311, aspartate 347, histidine 348, and histidine 359 each coordinate Mn(2+).

Belongs to the phosphopentomutase family. Mn(2+) serves as cofactor.

The protein resides in the cytoplasm. It catalyses the reaction 2-deoxy-alpha-D-ribose 1-phosphate = 2-deoxy-D-ribose 5-phosphate. The catalysed reaction is alpha-D-ribose 1-phosphate = D-ribose 5-phosphate. Its pathway is carbohydrate degradation; 2-deoxy-D-ribose 1-phosphate degradation; D-glyceraldehyde 3-phosphate and acetaldehyde from 2-deoxy-alpha-D-ribose 1-phosphate: step 1/2. Functionally, isomerase that catalyzes the conversion of deoxy-ribose 1-phosphate (dRib-1-P) and ribose 1-phosphate (Rib-1-P) to deoxy-ribose 5-phosphate (dRib-5-P) and ribose 5-phosphate (Rib-5-P), respectively. The protein is Phosphopentomutase of Buchnera aphidicola subsp. Acyrthosiphon pisum (strain 5A).